The chain runs to 65 residues: MKILYLLFAFLFLAFLSEPGNAYKQCHKKGGHCFPKEKICLPPSSDFGKMDCRWRWKCCKKGSGK.

An N-terminal signal peptide occupies residues 1–22 (MKILYLLFAFLFLAFLSEPGNA). 2 short sequence motifs (nuclear localization signal) span residues 24-40 (KQCH…EKIC) and 49-61 (KMDC…CCKK). Cystine bridges form between C26–C58, C33–C52, and C40–C59.

Belongs to the crotamine-myotoxin family. Monomer. As to expression, expressed by the venom gland.

It is found in the secreted. In terms of biological role, cationic peptide that possesses multiple functions. It acts as a cell-penetrating peptide (CPP), and as a potent voltage-gated potassium channel inhibitor. It exhibits antimicrobial activities, hind limb paralysis, and severe muscle necrosis by a non-enzymatic mechanism. As a cell-penetrating peptide, crotamine has high specificity for actively proliferating cells, and interacts inside the cell with subcellular and subnuclear structures, like vesicular compartments, chromosomes and centrioles. It penetrates into the cells as fast as five minutes after its addition to cell culture medium. In vivo, after intraperitoneal administration, it is found in cells of peritoneal fluid and bone marrow, demonstrating preferential nuclear and perinuclear localization. To enter the cell, it interacts with the chains of heparan sulfate membrane proteoglycan (HSPG), and is endocytosed (in complex with HSPG) in vesicles which are transported into the cell with the help of clathrin. Inside the cell, crotamine accumulates in lysosomal vesicles. As soon as the peptide accumulates in endosomes/lysosomes vesicles, these compartments are disrupted and their contents released into the cytosol. This loss of lysosomal content induces cell death at high concentrations, or promotes the distribution of crotamine in cytoplasmic compartments, which is a step before crotamine nuclear uptake. As a potassium channel inhibitor, this toxin selectively inhibits Kv1.1/KCNA1, Kv1.2/KCNA2 and Kv1.3/KCNA3 channels with an IC(50) of 369, 386 and 287 nM, respectively. The inhibition of Kv1.3/KCNA channels induced by this toxin occurs rapidly and is voltage-independent. The channel inhibition is reversible after washing, suggesting a pure and classical channel blockage effect, without effects in potassium channel kinetics. As an antimicrobial peptide, crotamine shows antibacterial activity against E.coli and B.subtilis, and antifungal activity against Candida spp., Trichosporon spp. and C.neoformans. It kills bacteria through membrane permeabilization. This Crotalus durissus terrificus (South American rattlesnake) protein is Crotamine (CRO2).